Here is an 82-residue protein sequence, read N- to C-terminus: Small ribosomal subunit protein bS18 (82 aa).

Positions 1-20 (MVDINQIPTRRPFHRRHKTC) are disordered.

The protein belongs to the bacterial ribosomal protein bS18 family. In terms of assembly, part of the 30S ribosomal subunit. Forms a tight heterodimer with protein bS6.

Its function is as follows. Binds as a heterodimer with protein bS6 to the central domain of the 16S rRNA, where it helps stabilize the platform of the 30S subunit. This Brucella suis (strain ATCC 23445 / NCTC 10510) protein is Small ribosomal subunit protein bS18.